Here is a 281-residue protein sequence, read N- to C-terminus: MSNILDGRELAKEIKERIKKETEILEKKPRIDFLYFEDDKSTEVYFTRAKKQAESVGMIGSLHNLPVNTTEKDFLTLIEYLNEESETSGIMIQMPLPKHISKKKVYETISIEKDADAISHVNLGRIFIGDSNLAPCTAKSAMALIEKSGINIEGANAVVIGRSEIVGKPLAHLLLQKSATVTIAHSKTKNLKELCKNADILCVSIGKAEFITGEYIKEGAVVIDVGINVLEDGSLKGDVNFEEASKLASYITPVPNGVGSVTVSMLLDNVLYLHKNIINKK.

NADP(+)-binding positions include 161–163 (GRS), Ser-186, and Ile-227.

The protein belongs to the tetrahydrofolate dehydrogenase/cyclohydrolase family. In terms of assembly, homodimer.

The enzyme catalyses (6R)-5,10-methylene-5,6,7,8-tetrahydrofolate + NADP(+) = (6R)-5,10-methenyltetrahydrofolate + NADPH. It catalyses the reaction (6R)-5,10-methenyltetrahydrofolate + H2O = (6R)-10-formyltetrahydrofolate + H(+). The protein operates within one-carbon metabolism; tetrahydrofolate interconversion. Catalyzes the oxidation of 5,10-methylenetetrahydrofolate to 5,10-methenyltetrahydrofolate and then the hydrolysis of 5,10-methenyltetrahydrofolate to 10-formyltetrahydrofolate. The chain is Bifunctional protein FolD from Brachyspira hyodysenteriae (strain ATCC 49526 / WA1).